The following is a 309-amino-acid chain: tRNA uridine(34) hydroxylase (309 aa).

The region spanning 130 to 224 (SDPDTIVIDT…YLEEVPQEES (95 aa)) is the Rhodanese domain. The Cysteine persulfide intermediate role is filled by Cys184.

Belongs to the TrhO family.

The catalysed reaction is uridine(34) in tRNA + AH2 + O2 = 5-hydroxyuridine(34) in tRNA + A + H2O. Functionally, catalyzes oxygen-dependent 5-hydroxyuridine (ho5U) modification at position 34 in tRNAs. The sequence is that of tRNA uridine(34) hydroxylase from Rhizobium etli (strain ATCC 51251 / DSM 11541 / JCM 21823 / NBRC 15573 / CFN 42).